The primary structure comprises 556 residues: Polypyrimidine tract-binding protein 1 (556 aa).

M1 carries the post-translational modification N-acetylmethionine. S16 is subject to Phosphoserine. The segment at 35 to 54 is disordered; the sequence is ASAANGNDSKKFKGDNRSTG. 3 consecutive RRM domains span residues 58–142, 183–259, and 362–436; these read RVIH…SSPN, LRII…FSKL, and SVLL…LSKH. Residue K64 forms a Glycyl lysine isopeptide (Lys-Gly) (interchain with G-Cter in SUMO2) linkage. Y126 bears the Phosphotyrosine mark. Position 137 is a phosphothreonine (T137). S140 is modified (phosphoserine). K217 is covalently cross-linked (Glycyl lysine isopeptide (Lys-Gly) (interchain with G-Cter in SUMO2)). Residues 436–458 are disordered; the sequence is HQSVQLPREGQEDQGLTKDYGSS. Residue S458 is modified to Phosphoserine. Positions 479 to 554 constitute an RRM 4 domain; the sequence is ATLHLSNIPP…HHLRVSFSKS (76 aa).

In terms of assembly, monomer. Part of a ternary complex containing KHSRP, PTBP1, PTBP2 and HNRPH1. Interacts with RAVER1 and SFPQ.

The protein localises to the nucleus. Plays a role in pre-mRNA splicing and in the regulation of alternative splicing events. Activates exon skipping of its own pre-mRNA during muscle cell differentiation. Binds to the polypyrimidine tract of introns. May promote RNA looping when bound to two separate polypyrimidine tracts in the same pre-mRNA. May promote the binding of U2 snRNP to pre-mRNA. Cooperates with RAVER1 to modulate switching between mutually exclusive exons during maturation of the TPM1 pre-mRNA. Represses the splicing of MAPT/Tau exon 10. Binds to polypyrimidine-rich controlling element (PCE) of CFTR and promotes exon skipping of CFTR exon 9, thereby antagonizing TIA1 and its role in exon inclusion of CFTR exon 9. Plays a role in the splicing of pyruvate kinase PKM by binding repressively to a polypyrimidine tract flanking PKM exon 9, inhibiting exon 9 inclusion and resulting in exon 10 inclusion and production of the PKM M2 isoform. This is Polypyrimidine tract-binding protein 1 (Ptbp1) from Rattus norvegicus (Rat).